Consider the following 550-residue polypeptide: MVGEEKMSLRNRLSKSRENPEEDEDQRKPAKESLEAPSNGRIDIKQLIAKKIKLTAEAEELKPFFMKEVGSHFDDFVTNLIEKSASLDNGGCALTTFSILEGEKNNHRAKDLRAPPEQGKIFIARRSLLDELLEVDHIRTIYHMFIALLILFILSTLVVDYIDEGRLVLEFSLLSYAFGKFPTVVWTWWIMFLSTFSVPYFLFQRWATGYSKSSHPLINSLFHGFLFMVFQIGILGFGPTYVVLAYTLPPASRFIIIFEQIRFVMKAHSFVRENVPRVLNSAKEKSSTVPIPTVNQYLYFLFAPTLIYRDSYPRNPTVRWGYVAMQFAQVFGCFFYVYYIFERLCAPLFRNIKQEPFSARVLVLCVFNSILPGVLILFLTFFAFLHCWLNAFAEMLRFGDRMFYKDWWNSTSYSNYYRTWNVVVHDWLYYYAYKDFLWFFSKRFKSAAMLAAFAVSAVVHEYALAVCLSFFYPVLFVLFMFFGMAFNFIVNDSRKKPIWNVMMWTSLFLGNGVLLCFYSQEWYARQHCPLKNPTFLDYVRPRSWTCRYVF.

The residue at position 1 (methionine 1) is an N-acetylmethionine. Positions 1–36 (MVGEEKMSLRNRLSKSRENPEEDEDQRKPAKESLEA) are disordered. The Cytoplasmic portion of the chain corresponds to 1-138 (MVGEEKMSLR…LDELLEVDHI (138 aa)). Serine 8 carries the post-translational modification Phosphoserine. The segment covering 15 to 34 (KSRENPEEDEDQRKPAKESL) has biased composition (basic and acidic residues). Histidine 137 lines the cholesterol pocket. The chain crosses the membrane as a helical span at residues 139-160 (RTIYHMFIALLILFILSTLVVD). Residues 161 to 180 (YIDEGRLVLEFSLLSYAFGK) are Lumenal-facing. A helical membrane pass occupies residues 181-206 (FPTVVWTWWIMFLSTFSVPYFLFQRW). Over 207–218 (ATGYSKSSHPLI) the chain is Cytoplasmic. The helical transmembrane segment at 219 to 244 (NSLFHGFLFMVFQIGILGFGPTYVVL) threads the bilayer. Residues 245-252 (AYTLPPAS) lie on the Lumenal side of the membrane. The chain crosses the membrane as a helical span at residues 253-276 (RFIIIFEQIRFVMKAHSFVRENVP). Over 277-319 (RVLNSAKEKSSTVPIPTVNQYLYFLFAPTLIYRDSYPRNPTVR) the chain is Cytoplasmic. A helical transmembrane segment spans residues 320-352 (WGYVAMQFAQVFGCFFYVYYIFERLCAPLFRNI). Residues 353–369 (KQEPFSARVLVLCVFNS) lie on the Lumenal side of the membrane. Residues 370 to 395 (ILPGVLILFLTFFAFLHCWLNAFAEM) traverse the membrane as a helical segment. At 396-443 (LRFGDRMFYKDWWNSTSYSNYYRTWNVVVHDWLYYYAYKDFLWFFSKR) the chain is on the cytoplasmic side. An FYXDWWN motif motif is present at residues 403 to 409 (FYKDWWN). An acyl-CoA is bound by residues asparagine 415, arginine 418, asparagine 421, histidine 425, tyrosine 433, lysine 445, and serine 456. The chain crosses the membrane as a helical span at residues 444–468 (FKSAAMLAAFAVSAVVHEYALAVCL). The active site involves histidine 460. Residues 469–474 (SFFYPV) are Lumenal-facing. Residues 475–490 (LFVLFMFFGMAFNFIV) form a helical membrane-spanning segment. Topologically, residues 491–496 (NDSRKK) are cytoplasmic. A helical membrane pass occupies residues 497 to 528 (PIWNVMMWTSLFLGNGVLLCFYSQEWYARQHC). Cysteine 528 and cysteine 546 form a disulfide bridge. The Lumenal portion of the chain corresponds to 529-550 (PLKNPTFLDYVRPRSWTCRYVF).

This sequence belongs to the membrane-bound acyltransferase family. Sterol o-acyltransferase subfamily. In terms of assembly, may form homo- or heterodimers. Interacts with UBIAD1. Expressed in most tissues, but most strongly in the adrenal gland. Expressed more strongly in liver Kupffer cells than in hepatocytes.

The protein localises to the endoplasmic reticulum membrane. The catalysed reaction is a sterol + a long-chain fatty acyl-CoA = a long-chain 3-hydroxysterol ester + CoA. It carries out the reaction cholesterol + an acyl-CoA = a cholesterol ester + CoA. The enzyme catalyses cholesterol + (9Z)-octadecenoyl-CoA = cholesteryl (9Z-octadecenoate) + CoA. It catalyses the reaction cholesterol + hexadecanoyl-CoA = cholesteryl hexadecanoate + CoA. The catalysed reaction is octadecanoyl-CoA + cholesterol = cholesteryl octadecanoate + CoA. It carries out the reaction (9Z,12Z)-octadecadienoyl-CoA + cholesterol = cholesteryl (9Z,12Z)-octadecadienoate + CoA. The enzyme catalyses (5Z,8Z,11Z,14Z)-eicosatetraenoyl-CoA + cholesterol = cholesteryl (5Z,8Z,11Z,14Z)-eicosatetraenoate + CoA. It catalyses the reaction (9Z)-hexadecenoyl-CoA + cholesterol = cholesteryl (9Z)-hexadecenoate + CoA. The catalysed reaction is (11Z)-octadecenoyl-CoA + cholesterol = cholesteryl (11Z)-octadecenoate + CoA. It carries out the reaction (7Z)-octadecenoyl-CoA + cholesterol = cholesteryl (7Z)-octadecenoate + CoA. Its function is as follows. Catalyzes the formation of fatty acid-cholesterol esters, which are less soluble in membranes than cholesterol. Plays a role in lipoprotein assembly and dietary cholesterol absorption. Preferentially utilizes oleoyl-CoA ((9Z)-octadecenoyl-CoA) as a substrate: shows a higher activity towards an acyl-CoA substrate with a double bond at the delta-9 position (9Z) than towards saturated acyl-CoA or an unsaturated acyl-CoA with a double bond at the delta-7 (7Z) or delta-11 (11Z) positions. This is Sterol O-acyltransferase 1 (SOAT1) from Macaca fascicularis (Crab-eating macaque).